Reading from the N-terminus, the 338-residue chain is Ribosomal RNA large subunit methyltransferase F (338 aa).

Residues 1–21 (MTQKKNKPTQKKKGLHPRNPH) form a disordered region.

The protein belongs to the methyltransferase superfamily. METTL16/RlmF family.

The protein localises to the cytoplasm. It catalyses the reaction adenosine(1618) in 23S rRNA + S-adenosyl-L-methionine = N(6)-methyladenosine(1618) in 23S rRNA + S-adenosyl-L-homocysteine + H(+). Its function is as follows. Specifically methylates the adenine in position 1618 of 23S rRNA. The sequence is that of Ribosomal RNA large subunit methyltransferase F from Photobacterium profundum (strain SS9).